The primary structure comprises 416 residues: UDP-N-acetylglucosamine 1-carboxyvinyltransferase (416 aa).

Residue 22 to 23 (KN) coordinates phosphoenolpyruvate. Arg-91 contributes to the UDP-N-acetyl-alpha-D-glucosamine binding site. The Proton donor role is filled by Cys-115. Cys-115 carries the post-translational modification 2-(S-cysteinyl)pyruvic acid O-phosphothioketal. Residues Asp-304 and Ile-326 each coordinate UDP-N-acetyl-alpha-D-glucosamine.

Belongs to the EPSP synthase family. MurA subfamily.

It is found in the cytoplasm. It catalyses the reaction phosphoenolpyruvate + UDP-N-acetyl-alpha-D-glucosamine = UDP-N-acetyl-3-O-(1-carboxyvinyl)-alpha-D-glucosamine + phosphate. The protein operates within cell wall biogenesis; peptidoglycan biosynthesis. Its function is as follows. Cell wall formation. Adds enolpyruvyl to UDP-N-acetylglucosamine. The chain is UDP-N-acetylglucosamine 1-carboxyvinyltransferase from Thermodesulfovibrio yellowstonii (strain ATCC 51303 / DSM 11347 / YP87).